Reading from the N-terminus, the 470-residue chain is Neuraminidase (470 aa).

Residues 1–6 (MNPNQK) are Intravirion-facing. The chain crosses the membrane as a helical span at residues 7–27 (IITIGSICMAIGTISLILQIG). An involved in apical transport and lipid raft association region spans residues 11–33 (GSICMAIGTISLILQIGNIISIW). The Virion surface segment spans residues 28–470 (NIISIWVSHS…GAELPFTIDK (443 aa)). The hypervariable stalk region stretch occupies residues 36 to 90 (HSIQTGSQNHTGICNQRIITYENNTWVNQTYVNISNTNVVAGKDTTSMILAGNSS). N-linked (GlcNAc...) asparagine; by host glycans are attached at residues Asn44, Asn58, Asn63, Asn68, and Asn88. The segment at 91–470 (LCPIRGWAIY…GAELPFTIDK (380 aa)) is head of neuraminidase. 8 cysteine pairs are disulfide-bonded: Cys92–Cys417, Cys124–Cys129, Cys184–Cys231, Cys233–Cys238, Cys279–Cys292, Cys281–Cys290, Cys318–Cys335, and Cys421–Cys447. Arg118 serves as a coordination point for substrate. Asn146 carries N-linked (GlcNAc...) asparagine; by host glycosylation. Asp151 (proton donor/acceptor) is an active-site residue. Position 152 (Arg152) interacts with substrate. N-linked (GlcNAc...) asparagine; by host glycosylation occurs at Asn235. Position 277–278 (277–278 (EE)) interacts with substrate. Arg293 contributes to the substrate binding site. Residues Asp294, Gly298, and Asp324 each contribute to the Ca(2+) site. Asn365 carries an N-linked (GlcNAc...) asparagine; by host glycan. Arg368 lines the substrate pocket. Tyr402 acts as the Nucleophile in catalysis. Asn455 is a glycosylation site (N-linked (GlcNAc...) asparagine; by host).

This sequence belongs to the glycosyl hydrolase 34 family. In terms of assembly, homotetramer. Requires Ca(2+) as cofactor. N-glycosylated.

Its subcellular location is the virion membrane. It is found in the host apical cell membrane. The enzyme catalyses Hydrolysis of alpha-(2-&gt;3)-, alpha-(2-&gt;6)-, alpha-(2-&gt;8)- glycosidic linkages of terminal sialic acid residues in oligosaccharides, glycoproteins, glycolipids, colominic acid and synthetic substrates.. With respect to regulation, inhibited by the neuraminidase inhibitors zanamivir (Relenza) and oseltamivir (Tamiflu). These drugs interfere with the release of progeny virus from infected cells and are effective against all influenza strains. Resistance to neuraminidase inhibitors is quite rare. Catalyzes the removal of terminal sialic acid residues from viral and cellular glycoconjugates. Cleaves off the terminal sialic acids on the glycosylated HA during virus budding to facilitate virus release. Additionally helps virus spread through the circulation by further removing sialic acids from the cell surface. These cleavages prevent self-aggregation and ensure the efficient spread of the progeny virus from cell to cell. Otherwise, infection would be limited to one round of replication. Described as a receptor-destroying enzyme because it cleaves a terminal sialic acid from the cellular receptors. May facilitate viral invasion of the upper airways by cleaving the sialic acid moieties on the mucin of the airway epithelial cells. Likely to plays a role in the budding process through its association with lipid rafts during intracellular transport. May additionally display a raft-association independent effect on budding. Plays a role in the determination of host range restriction on replication and virulence. Sialidase activity in late endosome/lysosome traffic seems to enhance virus replication. This Influenza A virus (strain A/USA:Albany/12/1951 H1N1) protein is Neuraminidase.